The chain runs to 131 residues: Small ribosomal subunit protein uS11 (131 aa).

The protein belongs to the universal ribosomal protein uS11 family. As to quaternary structure, part of the 30S ribosomal subunit. Interacts with proteins S7 and S18. Binds to IF-3.

Functionally, located on the platform of the 30S subunit, it bridges several disparate RNA helices of the 16S rRNA. Forms part of the Shine-Dalgarno cleft in the 70S ribosome. This is Small ribosomal subunit protein uS11 from Buchnera aphidicola subsp. Acyrthosiphon pisum (strain 5A).